A 169-amino-acid chain; its full sequence is UPF0303 protein BCAN_A1444 (169 aa).

Belongs to the UPF0303 family.

This Brucella canis (strain ATCC 23365 / NCTC 10854 / RM-666) protein is UPF0303 protein BCAN_A1444.